A 462-amino-acid chain; its full sequence is Centrosomal protein of 55 kDa (462 aa).

Over residues 1 to 11 (MSSRSPKDLIK) the composition is skewed to basic and acidic residues. Residues 1 to 26 (MSSRSPKDLIKSKWGSRPSSSKSDTA) are disordered. Residues 12–23 (SKWGSRPSSSKS) show a composition bias toward low complexity. Residues 50–400 (KMAEKGRSRL…TQLESLKQLH (351 aa)) are a coiled coil. Ser-96 and Ser-99 each carry phosphoserine. The interaction with TSG101 stretch occupies residues 157–235 (ANCFNSSMNS…EGYLQVEKQK (79 aa)). The segment at 160–214 (FNSSMNSIHEKEMQLKDALEKNQQWLVYDQQREAYVKGLLAKIFELEKRTETAAA) is interaction with PDCD6IP. The required for localization to the interphase centrosome and to the midbody during cytokinesis stretch occupies residues 354-462 (QMQACTLDFE…LLVHVEYCMK (109 aa)). Positions 410 to 430 (PLQREPESRVKATSPKSPSAA) are disordered. 3 positions are modified to phosphoserine: Ser-423, Ser-426, and Ser-428. Residue Ser-434 is modified to Phosphoserine; by PLK1.

Homodimer. Interacts (phosphorylated on Ser-423 and Ser-426) with PLK1; the interaction is indirect via the MTMR3:MTMR4 heterooligomer, occurs during early mitosis, regulates the phosphorylation of CEP55 by PLK1 and its recruitment to the midbody where it can mediate cell abscission. Interacts with AKAP9/CG-NAP; the interaction occurs in interphase and is lost upon mitotic entry. Interacts with PCNT/Kendrin; the interaction occurs in interphase and is lost upon mitotic entry. Directly interacts with PDCD6IP; this interaction is required for PDCD6IP targeting to the midbody; CEP55 binds PDCD6IP in a 2:1 stoichiometry; PDCD6IP competes with TSG101 for the same binding site. Interacts with TSG101; TSG101 competes with PDCD6IP for the same binding site; interaction is required for cytokinesis. Interacts with MVB12A, VPS37B, VPS37C and VPS28. Post-translationally, there is a hierachy of phosphorylation, where both Ser-423 and Ser-426 are phosphorylated at the onset of mitosis, prior to Ser-434. Phosphorylation at Ser-423 and Ser-426 is required for dissociation from the centrosome at the G2/M boundary. Phosphorylation at the 3 sites, Ser-423, Ser-426 and Ser-434, is required for protein function at the final stages of cell division to complete cytokinesis successfully.

The protein resides in the cytoplasm. Its subcellular location is the cytoskeleton. It is found in the microtubule organizing center. It localises to the centrosome. The protein localises to the centriole. The protein resides in the cleavage furrow. Its subcellular location is the midbody. It is found in the midbody ring. In terms of biological role, plays a role in mitotic exit and cytokinesis. Recruits PDCD6IP and TSG101 to midbody during cytokinesis. Required for successful completion of cytokinesis. Not required for microtubule nucleation. Plays a role in the development of the brain and kidney. This is Centrosomal protein of 55 kDa from Mus musculus (Mouse).